Reading from the N-terminus, the 313-residue chain is E3 ubiquitin-protein ligase RNF126 (313 aa).

Ala2 is subject to N-acetylalanine. Ser5 is subject to Phosphoserine. A required for interaction with BAG6 region spans residues 5 to 101 (SPQPGRYFCH…FEIPTFPPGA (97 aa)). Residues Cys13, Cys16, Cys29, and Cys32 each contribute to the Zn(2+) site. Residues 13–32 (CHCCSVEIVPRLPDYICPRC) form a C4-type zinc finger. 2 disordered regions span residues 42–64 (EETRSAENGSAPSTASADQSRQQ) and 96–128 (TFPPGAQADDSRDPESRREREQHSRHRYGARQP). Over residues 47-64 (AENGSAPSTASADQSRQQ) the composition is skewed to polar residues. Basic and acidic residues predominate over residues 104–117 (DDSRDPESRREREQ). The span at 118 to 128 (HSRHRYGARQP) shows a compositional bias: basic residues. Residues 203–306 (TGPPPADKEK…SSSSSSSPGN (104 aa)) form a sufficient for interaction with AICDA region. Residues 232–273 (CPVCKDDYGLGEHVRQLPCNHLFHDGCIVPWLEQHDSCPVCR) form an RING-type zinc finger. Residues 280 to 313 (NTATDPPGLAGVSFSSSSSSSSSSPGNENPASSS) form a disordered region. The span at 292-313 (SFSSSSSSSSSSPGNENPASSS) shows a compositional bias: low complexity.

Interacts with CCDC50, EGFR, FLT3 and SCAMP3. Interacts with BAG6 (via ubiquitin-like domain); required for BAG6-dependent ubiquitination of proteins mislocalized to the cytosol. Interacts with CDKN1A. Interacts with AICDA. Ubiquitinated. May undergo autoubiquitination.

Its subcellular location is the cytoplasm. The protein localises to the nucleus. The catalysed reaction is S-ubiquitinyl-[E2 ubiquitin-conjugating enzyme]-L-cysteine + [acceptor protein]-L-lysine = [E2 ubiquitin-conjugating enzyme]-L-cysteine + N(6)-ubiquitinyl-[acceptor protein]-L-lysine.. Its pathway is protein modification; protein ubiquitination. Its function is as follows. E3 ubiquitin-protein ligase that mediates ubiquitination oF target proteins. Depending on the associated E2 ligase, mediates 'Lys-27'-, 'Lys-29'-, 'Lys-48'- and/or 'Lys-63'-linked polyubiquitination of substrates. Part of a BAG6-dependent quality control process ensuring that proteins of the secretory pathway that are mislocalized to the cytosol are degraded by the proteasome. Probably acts by providing the ubiquitin ligase activity associated with the BAG6 complex and be responsible for ubiquitination of the hydrophobic mislocalized proteins and their targeting to the proteasome. May also play a role in the endosomal recycling of IGF2R, the cation-independent mannose-6-phosphate receptor. May play a role in the endosomal sorting and degradation of several membrane receptors including EGFR, FLT3, MET and CXCR4, by mediating their ubiquitination. By ubiquitinating CDKN1A/p21 and targeting it for degradation, may also promote cell proliferation. May monoubiquitinate AICDA. Acts as a regulator of DNA repair by mediating 'Lys-27'- and 'Lys-29'-linked polyubiquitination of MRE11, thereby promoting the exonuclease activity of MRE11. This is E3 ubiquitin-protein ligase RNF126 from Bos taurus (Bovine).